Here is a 260-residue protein sequence, read N- to C-terminus: LIM and SH3 domain protein 1 (260 aa).

Met-1 carries the N-acetylmethionine modification. Positions Cys-5 to His-56 constitute an LIM zinc-binding domain. Lys-42 carries the post-translational modification N6-acetyllysine. 2 Nebulin repeats span residues Ser-61 to Gly-95 and Gly-97 to Met-131. Thr-68 bears the Phosphothreonine mark. Position 75 is an N6-methyllysine (Lys-75). Phosphoserine is present on Ser-99. The residue at position 104 (Thr-104) is a Phosphothreonine. An N6-succinyllysine modification is found at Lys-112. A phosphoserine mark is found at Ser-118 and Ser-134. A disordered region spans residues His-123–Lys-204. A compositionally biased stretch (basic and acidic residues) spans Glu-140–Gln-155. Residues Gln-171–Gln-180 are compositionally biased toward low complexity. Residues Gly-201–Ile-260 enclose the SH3 domain.

As to quaternary structure, interacts with F-actin. Interacts with ANKRD54. Interacts with KBTBD10. In terms of processing, phosphorylated.

Its subcellular location is the cytoplasm. The protein localises to the cell cortex. It localises to the cytoskeleton. Its function is as follows. Plays an important role in the regulation of dynamic actin-based, cytoskeletal activities. Agonist-dependent changes in LASP1 phosphorylation may also serve to regulate actin-associated ion transport activities, not only in the parietal cell but also in certain other F-actin-rich secretory epithelial cell types. This chain is LIM and SH3 domain protein 1 (LASP1), found in Bos taurus (Bovine).